Consider the following 206-residue polypeptide: 2-oxoglutarate-dependent dioxygenase iboH (206 aa).

Residues 51-157 (PSTTTLVLLH…RYSIAYFLRP (107 aa)) enclose the Fe2OG dioxygenase domain. 3 residues coordinate Fe cation: His75, Asp77, and His134. Arg148 contributes to the 2-oxoglutarate binding site.

It belongs to the iron/ascorbate-dependent oxidoreductase family. Fe(2+) is required as a cofactor.

The catalysed reaction is L-glutamate + 2-oxoglutarate + O2 = (3R)-3-hydroxy-L-glutamate + succinate + CO2. Its pathway is secondary metabolite biosynthesis. In terms of biological role, 2-oxoglutarate-dependent dioxygenase; part of the gene cluster that mediates the biosynthesis of the psychoactive metabolites ibotenic acid and muscimol. The first committed step is glutamate hydroxylation by the 2-oxoglutarate-dependent dioxygenase iboH, and the last step is decarboxylation of ibotenic acid to muscimol by the decarboxylase iboD. The order of the intermediate reactions is somewhat ambiguous. IboA likely activates the carboxylic acid at position 5 to introduce an amide bond, and the flavin monooxygenase iboF generates the N-O bond. There are several options for the latter step. One option is that iboF directly hydroxylates the amide nitrogen formed by iboA to produce a hydroxamic acid species. Another option is that iboF hydroxylates an external N-containing compound, whose resulting N-O bond is subsequently introduced into the hydroxyglutamate scaffold. The paralogous PLP-dependent cystathionine gamma-synthase-like enzymes iboG1 and iboG2 are likely involved in substitution of the OH group at position 3 by the O-N moiety. The first cyclic intermediate is most probably tricholomic acid which is likely desaturated to ibotenic acid by the cytochrome P450 monooxygenase iboC. The polypeptide is 2-oxoglutarate-dependent dioxygenase iboH (Amanita muscaria (strain Koide BX008)).